The sequence spans 215 residues: Pyrrolidone-carboxylate peptidase (215 aa).

Residues Glu-80, Cys-143, and His-167 contribute to the active site.

The protein belongs to the peptidase C15 family. As to quaternary structure, homotetramer.

It is found in the cytoplasm. It catalyses the reaction Release of an N-terminal pyroglutamyl group from a polypeptide, the second amino acid generally not being Pro.. Its function is as follows. Removes 5-oxoproline from various penultimate amino acid residues except L-proline. The chain is Pyrrolidone-carboxylate peptidase from Bacillus thuringiensis subsp. konkukian (strain 97-27).